Consider the following 868-residue polypeptide: Thiol protease/hemagglutinin PrtT (868 aa).

The N-terminal stretch at 1-27 (MKRIFYTLGLLLLCLPMLQAGPVTRSK) is a signal peptide. Residues cysteine 184 and histidine 327 contribute to the active site.

Belongs to the peptidase C10 family.

Appears to be specific for arginine-containing peptide bonds. Possesses hemagglutinin activity. This chain is Thiol protease/hemagglutinin PrtT (prtT), found in Porphyromonas gingivalis (Bacteroides gingivalis).